The following is a 182-amino-acid chain: Isopentenyl-diphosphate Delta-isomerase (182 aa).

2 residues coordinate Mn(2+): histidine 25 and histidine 32. In terms of domain architecture, Nudix hydrolase spans 30–164 (LLHLAFSSWL…PWAFSPWMVM (135 aa)). Cysteine 67 is a catalytic residue. Histidine 69 serves as a coordination point for Mn(2+). Position 87 (glutamate 87) interacts with Mg(2+). Mn(2+) is bound by residues glutamate 114 and glutamate 116. The active site involves glutamate 116.

Belongs to the IPP isomerase type 1 family. As to quaternary structure, homodimer. Requires Mg(2+) as cofactor. Mn(2+) is required as a cofactor.

The protein resides in the cytoplasm. It carries out the reaction isopentenyl diphosphate = dimethylallyl diphosphate. Its pathway is isoprenoid biosynthesis; dimethylallyl diphosphate biosynthesis; dimethylallyl diphosphate from isopentenyl diphosphate: step 1/1. In terms of biological role, catalyzes the 1,3-allylic rearrangement of the homoallylic substrate isopentenyl (IPP) to its highly electrophilic allylic isomer, dimethylallyl diphosphate (DMAPP). The polypeptide is Isopentenyl-diphosphate Delta-isomerase (Escherichia coli O127:H6 (strain E2348/69 / EPEC)).